A 177-amino-acid chain; its full sequence is Putative thioredoxin peroxidase (177 aa).

One can recognise a Thioredoxin domain in the interval 1–158; sequence MFPKTLTDSK…IIRLIDAITF (158 aa). Cysteine 45 serves as the catalytic Cysteine sulfenic acid (-SOH) intermediate.

Belongs to the peroxiredoxin family. AhpC/Prx1 subfamily. As to quaternary structure, homodimer; disulfide-linked, upon oxidation.

It carries out the reaction a hydroperoxide + [thioredoxin]-dithiol = an alcohol + [thioredoxin]-disulfide + H2O. In terms of biological role, thiol-specific peroxidase that catalyzes the reduction of hydrogen peroxide and organic hydroperoxides to water and alcohols, respectively. Plays a role in cell protection against oxidative stress by detoxifying peroxides and as sensor of hydrogen peroxide-mediated signaling events. The chain is Putative thioredoxin peroxidase from Encephalitozoon cuniculi (strain GB-M1) (Microsporidian parasite).